We begin with the raw amino-acid sequence, 295 residues long: sn-glycerol-3-phosphate transport system permease protein UgpA (295 aa).

At 1–11 (MSSSRPVFRSR) the chain is on the cytoplasmic side. Residues 12 to 32 (WLPYLLVAPQLVITVIFFIWP) traverse the membrane as a helical segment. Residues 33-80 (AGEALWYSLQSVDPFGFSSQFVGLENFVALFHDSYYLDAFWTTIKFSA) lie on the Periplasmic side of the membrane. The ABC transmembrane type-1 domain maps to 76-284 (IKFSALVTFS…FLVIILTVVQ (209 aa)). Residues 81-101 (LVTFSGLLVSLFFAALVDYVV) form a helical membrane-spanning segment. At 102–109 (RGSRFYQT) the chain is on the cytoplasmic side. Residues 110 to 130 (LMLLPYAVAPAVAAVLWIFLF) form a helical membrane-spanning segment. At 131-157 (NPGRGLITHFLGEFGYDWNHAQNSGQA) the chain is on the periplasmic side. A helical membrane pass occupies residues 158–178 (MFLVVFASVWKQISYNFLFFF). The Cytoplasmic segment spans residues 179–207 (AALQSIPRSLVEAAAIDGAGPIRRFFRLS). The chain crosses the membrane as a helical span at residues 208–228 (LPLIAPVSFFLLVVNLVYAFF). Residues 229–262 (DTFPVIDAATAGGPVQATTTLIYKIYCEGFTGLD) are Periplasmic-facing. A helical membrane pass occupies residues 263-283 (LSASAAQSVVLMFLVIILTVV). At 284–295 (QFRYVESKVRYQ) the chain is on the cytoplasmic side.

It belongs to the binding-protein-dependent transport system permease family. UgpAE subfamily. The complex is composed of two ATP-binding proteins (UgpC), two transmembrane proteins (UgpA and UgpE) and a solute-binding protein (UgpB).

The protein localises to the cell inner membrane. Functionally, part of the ABC transporter complex UgpBAEC involved in sn-glycerol-3-phosphate (G3P) import. Probably responsible for the translocation of the substrate across the membrane. The sequence is that of sn-glycerol-3-phosphate transport system permease protein UgpA (ugpA) from Salmonella typhi.